Here is a 345-residue protein sequence, read N- to C-terminus: MAETDSFLHLARPLGPVAVGSAPTTAPLNVVIQPQAIFSILDHSLRRNADQERVIGTLLGTRSEDGTEVEIRSTFAVGHTETTDQVEVDMEYQKQMLALHLKANPKEVLVGWYATSSELNTFSALIQNFYSGQGDGTWPHPAVHLTVSTEPGKDIETRAYISAPVGVTAERAADSAAFIPVPYEIRYGEAEKSGLETIASAKDAESRATNIFTDIEALERAIEEVLGMIDRVSRYVESVIDEEAPASTALGQFLLNALALAPKVEPADIERDFNNHIQDVLVVSYLANTIRTQMELSNRLATAQLTLGGEGASAEAGAQRGQRGGRGGRGGQQRTQERASEEVRA.

The MPN domain occupies 30-166 (VVIQPQAIFS…TRAYISAPVG (137 aa)). A disordered region spans residues 310–345 (EGASAEAGAQRGQRGGRGGRGGQQRTQERASEEVRA). Residues 312 to 321 (ASAEAGAQRG) show a composition bias toward low complexity. Over residues 322–331 (QRGGRGGRGG) the composition is skewed to gly residues. A compositionally biased stretch (basic and acidic residues) spans 335–345 (TQERASEEVRA).

The protein belongs to the eIF-3 subunit F family. As to quaternary structure, component of the eukaryotic translation initiation factor 3 (eIF-3) complex.

It localises to the cytoplasm. Functionally, component of the eukaryotic translation initiation factor 3 (eIF-3) complex, which is involved in protein synthesis of a specialized repertoire of mRNAs and, together with other initiation factors, stimulates binding of mRNA and methionyl-tRNAi to the 40S ribosome. The eIF-3 complex specifically targets and initiates translation of a subset of mRNAs involved in cell proliferation. This is Eukaryotic translation initiation factor 3 subunit F from Neosartorya fischeri (strain ATCC 1020 / DSM 3700 / CBS 544.65 / FGSC A1164 / JCM 1740 / NRRL 181 / WB 181) (Aspergillus fischerianus).